A 294-amino-acid polypeptide reads, in one-letter code: MFIVKNLNFNFLNVISNFLPNKMLENVFIELYERGILLFLDVDSYCKNSDDADLNILKGRKEFLKYFDEPLEKGYVFTFNTDIHKLYKEIEEESCAVISYGYESDTDDKADDVGRNFVEILNKNGYITDWTEEVKDSKTIKIVIDENDIPNFKLNESPYLLNLTNDDLFENKNPLIQLIEDEPFPTTKNHNNDKRETNDKDDQQLKLNKMKEIEEKTIAFIDKNSLTKSQIEEYCTQQIINLDAIDTTDEIVKCRRKETIQNLQQVSLPTLKCSKCLKLYKQKKSYEKHIEKCN.

The segment at 181–204 is disordered; sequence DEPFPTTKNHNNDKRETNDKDDQQ. Positions 190-204 are enriched in basic and acidic residues; the sequence is HNNDKRETNDKDDQQ.

This sequence belongs to the IIV-6 391R family.

This is an uncharacterized protein from Acheta domesticus (House cricket).